We begin with the raw amino-acid sequence, 305 residues long: T-cell immunoglobulin and mucin domain-containing protein 2 (305 aa).

The N-terminal stretch at 1-21 (MNQIQVFISGLILLLPGAVES) is a signal peptide. Positions 22–125 (HTAVQGLAGH…AFHFVDYMLE (104 aa)) constitute an Ig-like V-type domain. The Extracellular portion of the chain corresponds to 22 to 231 (HTAVQGLAGH…QKPQKNLNKG (210 aa)). Cystine bridges form between C37-C109, C50-C61, and C56-C108. N-linked (GlcNAc...) asparagine glycosylation is found at N86 and N91. The tract at residues 130–174 (ISTSPPTRPTATGRPTTISTRSTHVPTSTRVSTSTSPTPAHTETY) is disordered. Residues 131-167 (STSPPTRPTATGRPTTISTRSTHVPTSTRVSTSTSPT) are compositionally biased toward low complexity. A helical membrane pass occupies residues 232–252 (FYVGISIAALLILMLLSTMVI). The Cytoplasmic segment spans residues 253–305 (TRYVVMKRKSESLSFVAFPISKIGASPKKVVERTRCEDQVYIIEDTPYPEEES).

Belongs to the immunoglobulin superfamily. TIM family. Homodimer. As to expression, expressed on late differentiated Th2 cells. Expressed also on all splenic B-cells, with increased levels on germinal center B-cells, in the liver, especially in bile duct epithelial cells, and in renal tubule cells. Within retina, mainly expressed in Mueller cells.

The protein localises to the cell membrane. In terms of biological role, cell surface glycoprotein that participates in iron homeostasis in the liver, the kidney, the retina and oligodendrocytes by acting as a receptor of H-ferritin. Mechanistically, mediates iron-containing ferritin uptake via an endocytic pathway, trafficking to endosomes and subsequently to lysosomes. Plays also an important role in the regulation of Th2 immunity. Receptor for SEMA4A involved in the regulation of T-cell function, enhancing T-cell activation. The chain is T-cell immunoglobulin and mucin domain-containing protein 2 (Timd2) from Mus musculus (Mouse).